The chain runs to 460 residues: Bifunctional protein GlmU (460 aa).

The pyrophosphorylase stretch occupies residues 1 to 228 (MKNYALVLAA…NSLAMGVNDL (228 aa)). Residues 8–11 (LAAG), Lys-22, Gln-72, and 77–78 (GT) each bind UDP-N-acetyl-alpha-D-glucosamine. Mg(2+) is bound at residue Asp-102. Gly-139, Glu-154, Asn-169, and Asn-226 together coordinate UDP-N-acetyl-alpha-D-glucosamine. Asn-226 is a Mg(2+) binding site. The segment at 229–249 (YAISKAEKYLREYINKDHMLN) is linker. Positions 250–460 (GVSMINPETI…LISPKPKKEE (211 aa)) are N-acetyltransferase. Positions 331 and 349 each coordinate UDP-N-acetyl-alpha-D-glucosamine. His-361 serves as the catalytic Proton acceptor. 2 residues coordinate UDP-N-acetyl-alpha-D-glucosamine: Tyr-364 and Asn-375. Residues 384-385 (NY), Ala-421, and Arg-438 contribute to the acetyl-CoA site.

The protein in the N-terminal section; belongs to the N-acetylglucosamine-1-phosphate uridyltransferase family. In the C-terminal section; belongs to the transferase hexapeptide repeat family. In terms of assembly, homotrimer. Mg(2+) serves as cofactor.

The protein resides in the cytoplasm. It catalyses the reaction alpha-D-glucosamine 1-phosphate + acetyl-CoA = N-acetyl-alpha-D-glucosamine 1-phosphate + CoA + H(+). The enzyme catalyses N-acetyl-alpha-D-glucosamine 1-phosphate + UTP + H(+) = UDP-N-acetyl-alpha-D-glucosamine + diphosphate. The protein operates within nucleotide-sugar biosynthesis; UDP-N-acetyl-alpha-D-glucosamine biosynthesis; N-acetyl-alpha-D-glucosamine 1-phosphate from alpha-D-glucosamine 6-phosphate (route II): step 2/2. It participates in nucleotide-sugar biosynthesis; UDP-N-acetyl-alpha-D-glucosamine biosynthesis; UDP-N-acetyl-alpha-D-glucosamine from N-acetyl-alpha-D-glucosamine 1-phosphate: step 1/1. It functions in the pathway bacterial outer membrane biogenesis; LPS lipid A biosynthesis. Functionally, catalyzes the last two sequential reactions in the de novo biosynthetic pathway for UDP-N-acetylglucosamine (UDP-GlcNAc). The C-terminal domain catalyzes the transfer of acetyl group from acetyl coenzyme A to glucosamine-1-phosphate (GlcN-1-P) to produce N-acetylglucosamine-1-phosphate (GlcNAc-1-P), which is converted into UDP-GlcNAc by the transfer of uridine 5-monophosphate (from uridine 5-triphosphate), a reaction catalyzed by the N-terminal domain. The polypeptide is Bifunctional protein GlmU (Acholeplasma laidlawii (strain PG-8A)).